We begin with the raw amino-acid sequence, 239 residues long: Fatty acid metabolism regulator protein (239 aa).

The HTH gntR-type domain maps to 6–74 (QSPAGFAEEY…HGKPTKVNNF (69 aa)). A DNA-binding region (H-T-H motif) is located at residues 34-53 (ERELSELIGVTRTTLREVLQ).

In terms of assembly, homodimer.

Its subcellular location is the cytoplasm. In terms of biological role, multifunctional regulator of fatty acid metabolism. The polypeptide is Fatty acid metabolism regulator protein (Salmonella paratyphi C (strain RKS4594)).